Consider the following 156-residue polypeptide: Small ribosomal subunit protein uS7 (156 aa).

It belongs to the universal ribosomal protein uS7 family. As to quaternary structure, part of the 30S ribosomal subunit. Contacts proteins S9 and S11.

Functionally, one of the primary rRNA binding proteins, it binds directly to 16S rRNA where it nucleates assembly of the head domain of the 30S subunit. Is located at the subunit interface close to the decoding center, probably blocks exit of the E-site tRNA. This chain is Small ribosomal subunit protein uS7, found in Mesorhizobium japonicum (strain LMG 29417 / CECT 9101 / MAFF 303099) (Mesorhizobium loti (strain MAFF 303099)).